The sequence spans 687 residues: Putative ammonium transporter 3 (687 aa).

Transmembrane regions (helical) follow at residues 39–59, 77–97, 134–154, 162–182, 196–216, 240–260, 272–292, 299–319, 323–343, 352–372, and 404–424; these read AVWI…FGLL, VVDV…FSYG, ASFL…SGAV, SYIL…HWVW, FAGC…ATVF, LGTF…VWGI, AVAT…ISFV, VNFL…ICAV, WHAL…LPLL, VGIV…VGIF, and CTAA…FLIS. Disordered regions lie at residues 521–544, 549–568, and 592–687; these read RTNA…FNNQ, AVSS…RRTE, and PPEE…NPPV. Positions 549–564 are enriched in polar residues; that stretch reads AVSSTVSTARNGPSTG. 2 stretches are compositionally biased toward low complexity: residues 614–632 and 648–665; these read SPSS…SPSI and STAS…KNST.

It belongs to the ammonia transporter channel (TC 1.A.11.2) family.

The protein resides in the membrane. Its function is as follows. Involved in the uptake of ammonia. In Caenorhabditis elegans, this protein is Putative ammonium transporter 3 (amt-3).